A 394-amino-acid polypeptide reads, in one-letter code: Xylose isomerase (394 aa).

Active-site residues include histidine 54 and aspartate 57. The Mg(2+) site is built by glutamate 181, glutamate 217, histidine 220, aspartate 245, aspartate 255, aspartate 257, and aspartate 292.

It belongs to the xylose isomerase family. Homotetramer. It depends on Mg(2+) as a cofactor.

Its subcellular location is the cytoplasm. The enzyme catalyses alpha-D-xylose = alpha-D-xylulofuranose. The sequence is that of Xylose isomerase (xylA) from Actinoplanes sp. (strain ATCC 31351 / 3876) (Ampullariella sp.).